We begin with the raw amino-acid sequence, 893 residues long: Genome polyprotein 2 (893 aa).

One can recognise a Peptidase C6 domain in the interval 109–229 (TAEFKSGFCY…GCEYMLYPVG (121 aa)). Residues C117 and H189 each act as for helper component proteinase activity in the active site. Residues 502-539 (WVTLNSGDDDDDQSGGGGGGPQTPGGQPPVPHTRGTHQ) form a disordered region. Residues 515–524 (SGGGGGGPQT) are compositionally biased toward gly residues.

Belongs to the bymoviruses polyprotein 2 family. Post-translationally, the viral RNA2 of bymoviruses is expressed as a single polyprotein which undergoes post-translational proteolytic processing resulting in the production of at least two individual proteins. The HC-pro cleaves its C-terminus autocatalytically (Potential).

It carries out the reaction Hydrolyzes a Gly-|-Gly bond at its own C-terminus, commonly in the sequence -Tyr-Xaa-Val-Gly-|-Gly, in the processing of the potyviral polyprotein.. The polypeptide is Genome polyprotein 2 (RNA2) (Barley mild mosaic virus (strain ASL) (BaMMV)).